A 333-amino-acid chain; its full sequence is L-lactate dehydrogenase B chain (333 aa).

Residues Gly-29–Lys-57 and Arg-99 contribute to the NAD(+) site. Residues Arg-106, Asn-138, and Arg-169 each contribute to the substrate site. Asn-138 contacts NAD(+). His-193 functions as the Proton acceptor in the catalytic mechanism. Thr-248 serves as a coordination point for substrate.

This sequence belongs to the LDH/MDH superfamily. LDH family. Homotetramer.

It is found in the cytoplasm. The enzyme catalyses (S)-lactate + NAD(+) = pyruvate + NADH + H(+). The protein operates within fermentation; pyruvate fermentation to lactate; (S)-lactate from pyruvate: step 1/1. Its function is as follows. Interconverts simultaneously and stereospecifically pyruvate and lactate with concomitant interconversion of NADH and NAD(+). This Alligator mississippiensis (American alligator) protein is L-lactate dehydrogenase B chain (LDHB).